Reading from the N-terminus, the 350-residue chain is tRNA uridine(34) hydroxylase (350 aa).

Residues 146-240 (DDPDALFIDM…YARKAREQGL (95 aa)) enclose the Rhodanese domain. Catalysis depends on Cys-200, which acts as the Cysteine persulfide intermediate.

This sequence belongs to the TrhO family.

It catalyses the reaction uridine(34) in tRNA + AH2 + O2 = 5-hydroxyuridine(34) in tRNA + A + H2O. Its function is as follows. Catalyzes oxygen-dependent 5-hydroxyuridine (ho5U) modification at position 34 in tRNAs, the first step in 5-carboxymethoxyuridine (cmo5U) biosynthesis. May be part of an alternate pathway, which is able to bypass cmo5U biogenesis in a subset of tRNAs under aerobic conditions. This Escherichia coli (strain SE11) protein is tRNA uridine(34) hydroxylase.